A 150-amino-acid polypeptide reads, in one-letter code: Protein Smg homolog (150 aa).

This sequence belongs to the Smg family.

This is Protein Smg homolog from Leptothrix cholodnii (strain ATCC 51168 / LMG 8142 / SP-6) (Leptothrix discophora (strain SP-6)).